A 308-amino-acid polypeptide reads, in one-letter code: Glutaminase (308 aa).

Substrate contacts are provided by serine 66, asparagine 117, glutamate 161, asparagine 168, tyrosine 192, tyrosine 244, and valine 262.

It belongs to the glutaminase family. In terms of assembly, homotetramer.

The enzyme catalyses L-glutamine + H2O = L-glutamate + NH4(+). The polypeptide is Glutaminase (Klebsiella pneumoniae (strain 342)).